The sequence spans 1103 residues: MELERNCMLYIYSSRGDAPSTAELQKKIESPNEATKAEGMQDLIIGMTQGEAYTRLLMTVIRYAMPSKDKRVKKLTQLYLEIVGKCRPDGSLKEEMILICNALRNDLMSPNEYVRGSTLRLLSKIRQFKVLEPLVEAILQNLTHRHSYVRRNAVMCVYSIVKNFGLDAIPATIDQIEQMLLSEGDLTTKRNAFLVLVHCASKRAIQFILQQRSEDGTGGLGFLLSSGDLFQLALLELLRKVCRQKQQQKAGLLRLIVSILPNTLPSVAYEGACSLLALSRAPVSLKAAAGAFASLLCGNSDNNVKLIVLDRLQECVQRASRRTMEEFVIDLLRGLQTPSLEVRRKILDLVLQIVGKNSVEQLLNVLKRELLRTAEPEQLTVPRTMEYRRLLIKAVHSCCTRFPEAAASVVNVLIDFPGDPDVTTATEVAVVVRELVATCVHLRSRIISRVVDAFPDSAHARVLRVSLWMLGEFCEDSELLDSFLTAVYAACSPLPFTSGDSGGAEGEQRSGCQPKLKMTTRTVVLEDGTYGTEDVYESVNEKGDSSAKAGKTALRKFILGGDFLLASTVAVTCAKLILKTSDEVHAQLAEEFERHREAVQEKAGRRTLTGDAQARETLLERQELEGKVAPVKLRASTEQKTRVLYLVACLLKFLRLSSSGAGAHSDAAIRVCQSLRALCGLMTGLEKEKAFVRHWVHHGRFALERVLALGPVSDDPFTWNLKDAEDEKTVSAPDDLAFFRQLRPDRQSLMVASEGVAAVGEDSLEEDEIYYSACAGLARGAELEEVDETEADLQLTVGGAGGTSPSLSGGNAKDDAALFQQRLAKVQPITGQADPLYVEAFLQVNQFDLLVEMLVVNRTQDSLQNVTVEPSTHGDLKLVERPAPVSLAPGQQAVLHAPIKVRSTEAGIILGYVTFSRRGSSDKECLVLNELHIDVLDYIERRWTCELAFRSMWAEFEWENKIHVNTSFTDVSEFLEHLMKMTNLTVVGFRPPASVMRRLKFSAACAGLDEAERAAGDGEEDEDRYLQSVRKIPTLRKLSESSSFFAVNLYSRSIFGEDALVNVSIEKLPGGKLAGSIRIRSRTQGIALSLGDRITVVQRGLTK.

7 HEAT repeats span residues 51-89 (EAYT…CRPD), 94-129 (EEMI…RQFK), 130-166 (VLEP…NFGL), 247-284 (QQKA…APVS), 322-359 (RTME…KNSV), 365-404 (VLKR…RFPE), and 405-441 (AAAS…TCVH).

Oligomeric complex that consists of at least the alpha, beta, beta', gamma, delta, epsilon and zeta subunits.

Its subcellular location is the cytoplasm. The protein localises to the golgi apparatus membrane. It is found in the cytoplasmic vesicle. The protein resides in the COPI-coated vesicle membrane. In terms of biological role, the coatomer is a cytosolic protein complex that binds to dilysine motifs and reversibly associates with Golgi non-clathrin-coated vesicles, which further mediate biosynthetic protein transport from the ER, via the Golgi up to the trans Golgi network. Coatomer complex is required for budding from Golgi membranes, and is essential for the retrograde Golgi-to-ER transport of dilysine-tagged proteins. The polypeptide is Coatomer subunit beta (Toxoplasma gondii).